Reading from the N-terminus, the 356-residue chain is Guanine nucleotide-binding protein alpha-17 subunit (356 aa).

Gly-2 carries the N-myristoyl glycine lipid modification. The S-palmitoyl cysteine moiety is linked to residue Cys-4. The G-alpha domain occupies Ser-32 to Met-356. A G1 motif region spans residues Lys-35–Thr-48. GTP contacts are provided by residues Gly-40–Ser-47, Leu-177–Thr-183, Asp-202–Gln-206, Asn-271–Asp-274, and Ala-328. 2 residues coordinate Mg(2+): Ser-47 and Thr-183. Positions Asp-175–Thr-183 are G2 motif. The tract at residues Phe-198 to Arg-207 is G3 motif. Residues Ile-267 to Asp-274 form a G4 motif region. The segment at Thr-326–Thr-331 is G5 motif.

The protein belongs to the G-alpha family. G proteins are composed of 3 units; alpha, beta and gamma. The alpha chain contains the guanine nucleotide binding site. Expressed in sensory neurons in the head and tail. Expressed in amphid AWC neurons, to a lesser extent in AWB and weakly in AWA, ASH and ADF neurons (head sensory neurons). Expressed in phasmid PHA and PHB neurons (tail sensory neurons).

Its subcellular location is the cell projection. It localises to the cilium. It is found in the dendrite. Functionally, guanine nucleotide-binding proteins (G proteins) are involved as modulators or transducers in various transmembrane signaling systems. This specific G-alpha subunit plays an important role in olfaction and in cilia morphogenesis. Involved in chemotactic responses to attractants diacetyl, pyrazine, 2,4,5-trimethylthiazole, benzaldehyde, isoamyl alcohol, butanone and 2,3-pentanedione. Displays a redundant function with gpa-3 in chemotactic responses. Plays a role in the avoidance response to the noxious chemical quinine in ASH sensory neurons. Involved in avoidance responses to copper, sodium dodecyl sulfate and linoleic acid. Involved in osmotic avoidance and mechanosensory responses. Involved in specifying fan-like morphology of cilia of head sensory neurons AWC. Plays a role in the detection of preferred food sources by mediating the recognition of food odors in olfactory sensory neurons. The protein is Guanine nucleotide-binding protein alpha-17 subunit of Caenorhabditis elegans.